The primary structure comprises 623 residues: MSSPVPGLMLPEKRVVEVRNLSVYFEQQGQRTDAVRNLTFSVDRGETLAIVGESGSGKSVTSLALMRLVEHAGGVIHQGDMLFRRRDGQVLDLRGARQRVMRTLRGADLAMIFQEPMTSLNPVFPVGEQIAESIRLHQRMDRRAARAETLRMLDLVRIPEARNVLDRYPHQLSGGMRQRVMIAMALSCKPSLLIADEPTTALDVTIQAQILQLIRVLQREMDMAVIFITHDMGVVAEVAERVLVMHRGESVEAASVGQIFAAPQHPYTQGLLAAVPALGSMRGQPFPAKFPLLDQNTARIVDNVPQDTVPAHAEPILQVSNLVTRFPIRSGLLNRVTRQVHAVEKVSFDLWPGETLSLVGESGCGKSTTGRALLQLVESQKGDITFDGQRIHQLKGAALQHLRRDIQLIFQDPYASLDPRLTVGFSIMEPLLVHNVCRRQEAEKRVAWLLSRVGLEPEHARRYPHEFSGGQRQRVCIARALALNPKVVIADEAVSALDVSIQAQIINLMLELQREFGIAFLFISHDMAVVERISHRVAVMYMGQIVEIGPRQDVFERPQHPYTRKLMSAVPVADPSRRQREQVLLVDEIPSPIRAIGDEPTTAPLVQVGKRHFVAHHPIAGAY.

ABC transporter domains are found at residues 18 to 272 (VRNL…QGLL) and 317 to 567 (LQVS…RKLM). Residues 52 to 59 (GESGSGKS) and 360 to 367 (GESGCGKS) each bind ATP.

It belongs to the ABC transporter superfamily. Glutathione importer (TC 3.A.1.5.11) family. In terms of assembly, the complex is composed of two ATP-binding proteins (GsiA), two transmembrane proteins (GsiC and GsiD) and a solute-binding protein (GsiB).

Its subcellular location is the cell inner membrane. The catalysed reaction is glutathione(out) + ATP + H2O = glutathione(in) + ADP + phosphate + H(+). Its function is as follows. Part of the ABC transporter complex GsiABCD involved in glutathione import. Responsible for energy coupling to the transport system. This chain is Glutathione import ATP-binding protein GsiA, found in Pectobacterium atrosepticum (strain SCRI 1043 / ATCC BAA-672) (Erwinia carotovora subsp. atroseptica).